The following is a 74-amino-acid chain: Toxin BmKaTx17 (74 aa).

A signal peptide spans 1–8 (LLMTGVES). One can recognise an LCN-type CS-alpha/beta domain in the interval 10-72 (RDAYIAKNYN…KPIRIPGKCH (63 aa)). Disulfide bonds link cysteine 20–cysteine 71, cysteine 24–cysteine 44, cysteine 30–cysteine 54, and cysteine 34–cysteine 56. Positions 73–74 (RR) are cleaved as a propeptide — removed by a carboxypeptidase.

Belongs to the long (4 C-C) scorpion toxin superfamily. Sodium channel inhibitor family. Alpha subfamily. Expressed by the venom gland.

It localises to the secreted. Alpha toxins bind voltage-independently at site-3 of sodium channels (Nav) and inhibit the inactivation of the activated channels, thereby blocking neuronal transmission. The sequence is that of Toxin BmKaTx17 from Olivierus martensii (Manchurian scorpion).